The chain runs to 98 residues: DNA-binding protein Fis (98 aa).

A DNA-binding region (H-T-H motif) is located at residues 74–93; sequence QTRAATMLGINRGTLRKKLK.

The protein belongs to the transcriptional regulatory Fis family. As to quaternary structure, homodimer.

In terms of biological role, activates ribosomal RNA transcription. Plays a direct role in upstream activation of rRNA promoters. This Haemophilus ducreyi (strain 35000HP / ATCC 700724) protein is DNA-binding protein Fis.